Here is a 157-residue protein sequence, read N- to C-terminus: Ribosome maturation factor RimP (157 aa).

Belongs to the RimP family.

The protein localises to the cytoplasm. Required for maturation of 30S ribosomal subunits. This Thermus thermophilus (strain ATCC BAA-163 / DSM 7039 / HB27) protein is Ribosome maturation factor RimP.